A 154-amino-acid chain; its full sequence is Aspartate carbamoyltransferase regulatory chain (154 aa).

Zn(2+) is bound by residues Cys-109, Cys-114, Cys-138, and Cys-141.

It belongs to the PyrI family. Contains catalytic and regulatory chains. Zn(2+) is required as a cofactor.

Its function is as follows. Involved in allosteric regulation of aspartate carbamoyltransferase. The chain is Aspartate carbamoyltransferase regulatory chain from Sodalis glossinidius (strain morsitans).